Reading from the N-terminus, the 197-residue chain is Elongation factor Ts (197 aa).

The segment at 81-84 is involved in Mg(2+) ion dislocation from EF-Tu; it reads TDFV.

The protein belongs to the EF-Ts family.

It localises to the cytoplasm. Its function is as follows. Associates with the EF-Tu.GDP complex and induces the exchange of GDP to GTP. It remains bound to the aminoacyl-tRNA.EF-Tu.GTP complex up to the GTP hydrolysis stage on the ribosome. This is Elongation factor Ts from Fervidobacterium nodosum (strain ATCC 35602 / DSM 5306 / Rt17-B1).